Here is a 322-residue protein sequence, read N- to C-terminus: Epoxide hydrolase A (322 aa).

The 105-residue stretch at 27–131 (PVVILAHGFP…AVAALSVPAL (105 aa)) folds into the AB hydrolase-1 domain. The active-site Nucleophile is the Asp103. Catalysis depends on His298, which acts as the Proton acceptor.

Belongs to the AB hydrolase superfamily. Epoxide hydrolase family. As to quaternary structure, homodimer.

The enzyme catalyses an epoxide + H2O = an ethanediol. In terms of biological role, could be involved in detoxification of extraneous host-cell epoxides. Catalyzes the hydrolysis of epoxide-containing substrates. This is Epoxide hydrolase A (ephA) from Mycobacterium tuberculosis (strain ATCC 25618 / H37Rv).